Reading from the N-terminus, the 324-residue chain is Acetyl-coenzyme A carboxylase carboxyl transferase subunit alpha (324 aa).

The region spanning 37-291 (ILEDKLENLE…DLMIRKTFEQ (255 aa)) is the CoA carboxyltransferase C-terminal domain.

The protein belongs to the AccA family. As to quaternary structure, acetyl-CoA carboxylase is a heterohexamer composed of biotin carboxyl carrier protein (AccB), biotin carboxylase (AccC) and two subunits each of ACCase subunit alpha (AccA) and ACCase subunit beta (AccD).

It is found in the cytoplasm. It carries out the reaction N(6)-carboxybiotinyl-L-lysyl-[protein] + acetyl-CoA = N(6)-biotinyl-L-lysyl-[protein] + malonyl-CoA. It functions in the pathway lipid metabolism; malonyl-CoA biosynthesis; malonyl-CoA from acetyl-CoA: step 1/1. Functionally, component of the acetyl coenzyme A carboxylase (ACC) complex. First, biotin carboxylase catalyzes the carboxylation of biotin on its carrier protein (BCCP) and then the CO(2) group is transferred by the carboxyltransferase to acetyl-CoA to form malonyl-CoA. The protein is Acetyl-coenzyme A carboxylase carboxyl transferase subunit alpha of Bacillus cereus (strain G9842).